The primary structure comprises 63 residues: UPF0512 protein X (63 aa).

It belongs to the UPF0512 family.

This is UPF0512 protein X from Dictyostelium discoideum (Social amoeba).